Reading from the N-terminus, the 323-residue chain is Aspartate carbamoyltransferase catalytic subunit (323 aa).

Carbamoyl phosphate is bound by residues arginine 61 and threonine 62. L-aspartate is bound at residue lysine 89. Carbamoyl phosphate contacts are provided by arginine 111, histidine 144, and glutamine 147. 2 residues coordinate L-aspartate: arginine 184 and arginine 238. 2 residues coordinate carbamoyl phosphate: glycine 279 and proline 280.

The protein belongs to the aspartate/ornithine carbamoyltransferase superfamily. ATCase family. Heterododecamer (2C3:3R2) of six catalytic PyrB chains organized as two trimers (C3), and six regulatory PyrI chains organized as three dimers (R2).

It catalyses the reaction carbamoyl phosphate + L-aspartate = N-carbamoyl-L-aspartate + phosphate + H(+). Its pathway is pyrimidine metabolism; UMP biosynthesis via de novo pathway; (S)-dihydroorotate from bicarbonate: step 2/3. Functionally, catalyzes the condensation of carbamoyl phosphate and aspartate to form carbamoyl aspartate and inorganic phosphate, the committed step in the de novo pyrimidine nucleotide biosynthesis pathway. This Acaryochloris marina (strain MBIC 11017) protein is Aspartate carbamoyltransferase catalytic subunit.